We begin with the raw amino-acid sequence, 866 residues long: MPAVSLPPKENALFKRILRCYEHKQYRNGLKFCKQILSNPKFAEHGETLAMKGLTLNCLGKKEEAYELVRRGLRNDLKSHVCWHVYGLLQRSDKKYDEAIKCYRNALKWDKDNLQILRDLSLLQIQMRDLEGYRETRYQLLQLRPAQRASWIGYAIAYHLLEDYEMAAKILEEFRKTQQTSPDKVDYEYSELLLYQNQVLREAGLYREALEHLCTYEKQICDKLAVEETKGELLLQLCRLEDAADVYRGLQERNPENWAYYKGLEKALKPANMLERLKIYEEAWTKYPRGLVPRRLPLNFLSGEKFKECLDKFLRMNFSKGCPPVFNTLRSLYKDKEKVAIIEELVVGYETSLKSCRLFNPNDDGKEEPPTTLLWVQYYLAQHYDKIGQPSIALEYINTAIESTPTLIELFLVKAKIYKHAGNIKEAARWMDEAQALDTADRFINSKCAKYMLKANLIKEAEEMCSKFTREGTSAVENLNEMQCMWFQTECAQAYKAMNKFGEALKKCYEIERHFIEITDDQFDFHTYCMRKITLRSYVDLLKLEDVLRQHPFYFKAARIAIEIYLKLHDNPLTDENKEHEADTANMSDKELKKLRNKQRRAQKKAQIEEEKKNAEKEKQQRNQKKKKDDDDEEIGGPKEELIPEKLAKVETPLEEAIKFLTPLKNLVKNKIETHLFAFEIYFRKEKFLLMLQSVKRAFAIDSSHPWLHECMIRLFNTAVCESKDLSDTVRTVLKQEMHRLFGATNPKNFNETFLKRNSDSLPHRLSAAKMVYYLDPSSQKRAIELATTLDESLTNRNLQTCMEVLETLYDGSLGDCKEAAEIYRANCHKLFPYALAFMPPGYEEDMKITVNGDSSAEAEELANEI.

TPR repeat units follow at residues 46-79 (GETL…DLKS), 80-113 (HVCW…DKDN), 148-184 (RASW…SPDK), and 224-257 (LAVE…NPEN). The residue at position 262 (K262) is an N6-acetyllysine. The residue at position 302 (S302) is a Phosphoserine. 3 TPR repeats span residues 374–407 (LWVQ…TPTL), 409–441 (ELFL…DTAD), and 485–522 (MWFQ…TDDQ). An interaction with HYPK region spans residues 500-866 (KFGEALKKCY…AEAEELANEI (367 aa)). 2 positions are modified to phosphoserine: S537 and S588. Over residues 579-594 (EHEADTANMSDKELKK) the composition is skewed to basic and acidic residues. The disordered stretch occupies residues 579 to 642 (EHEADTANMS…EEIGGPKEEL (64 aa)). Positions 595–604 (LRNKQRRAQK) are enriched in basic residues. Residues 606 to 621 (AQIEEEKKNAEKEKQQ) show a composition bias toward basic and acidic residues. One copy of the TPR 8 repeat lies at 672 to 705 (IETHLFAFEIYFRKEKFLLMLQSVKRAFAIDSSH). Residues K735 and K756 each carry the N6-acetyllysine modification. A phosphoserine mark is found at S855 and S856.

Component of the N-terminal acetyltransferase A (NatA) complex composed of NAA10 or probably NAA11 and NAA15. Interacts with XRCC6, NAA50 and XRCC5. Associates with HYPK when in a complex with NAA10. Interaction with HYPK reduces the capacity to interact with NAA50. Cleaved by caspases during apoptosis.

The protein resides in the cytoplasm. It is found in the nucleus. Its function is as follows. Auxillary subunit of the N-terminal acetyltransferase A (NatA) complex which displays alpha (N-terminal) acetyltransferase activity. The NAT activity may be important for vascular, hematopoietic and neuronal growth and development. Required to control retinal neovascularization in adult ocular endothelial cells. In complex with XRCC6 and XRCC5 (Ku80), up-regulates transcription from the osteocalcin promoter. This is N-alpha-acetyltransferase 15, NatA auxiliary subunit (NAA15) from Pongo abelii (Sumatran orangutan).